Consider the following 154-residue polypeptide: Ribonuclease H (154 aa).

In terms of domain architecture, RNase H type-1 spans 1 to 142 (MTKQVEIFTD…CDELAREGAN (142 aa)). Mg(2+) is bound by residues Asp-10, Glu-48, Asp-70, and Asp-134.

It belongs to the RNase H family. Monomer. Mg(2+) serves as cofactor.

The protein localises to the cytoplasm. It catalyses the reaction Endonucleolytic cleavage to 5'-phosphomonoester.. In terms of biological role, endonuclease that specifically degrades the RNA of RNA-DNA hybrids. This chain is Ribonuclease H, found in Yersinia enterocolitica serotype O:8 / biotype 1B (strain NCTC 13174 / 8081).